A 94-amino-acid chain; its full sequence is Acylphosphatase (94 aa).

One can recognise an Acylphosphatase-like domain in the interval 8–94 (HIRAWVSGKV…ETPPLGFEVC (87 aa)). Catalysis depends on residues Arg23 and Asn41.

It belongs to the acylphosphatase family.

It carries out the reaction an acyl phosphate + H2O = a carboxylate + phosphate + H(+). This is Acylphosphatase (acyP) from Hahella chejuensis (strain KCTC 2396).